We begin with the raw amino-acid sequence, 299 residues long: MAIDIFQSLKNCVFDLQRADVQNYQQPLKQLARLLNSENLQSVNAHLTRNVELDTFLARSEDTESSMAGSAVLQWPDEPADILGLKLLLIEKMADDNNFSFNFCHTFFYDRNIIESIRKFTSSLVAPFVRDYQLYVENQHDPEPAVFRPVSRKIFIVHGHDNDALQSVARFISRIGLEEIILSERPDGSRTIIEKFEAESGDVSFAIVLMTPDDSGSALASESTRLRARQNVLYELGYFAGKLGRGKVLVLRKGDIEIPSDLAGVLYTELDEHGGWKRKLLSELAYAGVPFDKDKALSA.

This is an uncharacterized protein from Escherichia coli (strain K12).